Consider the following 79-residue polypeptide: Putative transmembrane protein ORF17 (79 aa).

Helical transmembrane passes span 8–28 (LMIY…IMYY) and 50–70 (VFVM…TTTI).

The protein localises to the host membrane. In Haloarcula hispanica (His1V), this protein is Putative transmembrane protein ORF17.